The chain runs to 64 residues: Translational regulator CsrA (64 aa).

The protein belongs to the CsrA/RsmA family. Homodimer; the beta-strands of each monomer intercalate to form a hydrophobic core, while the alpha-helices form wings that extend away from the core.

Its subcellular location is the cytoplasm. Its function is as follows. A key translational regulator that binds mRNA to regulate translation initiation and/or mRNA stability. Mediates global changes in gene expression, shifting from rapid growth to stress survival by linking envelope stress, the stringent response and the catabolite repression systems. Usually binds in the 5'-UTR; binding at or near the Shine-Dalgarno sequence prevents ribosome-binding, repressing translation, binding elsewhere in the 5'-UTR can activate translation and/or stabilize the mRNA. Its function is antagonized by small RNA(s). The polypeptide is Translational regulator CsrA (Actinobacillus pleuropneumoniae serotype 5b (strain L20)).